A 218-amino-acid chain; its full sequence is Guanylate kinase (218 aa).

The Guanylate kinase-like domain occupies 17 to 196; sequence GVLLALSSPS…ALEKLNEILH (180 aa). 24-31 contacts ATP; the sequence is SPSGAGKT.

Belongs to the guanylate kinase family.

Its subcellular location is the cytoplasm. It carries out the reaction GMP + ATP = GDP + ADP. In terms of biological role, essential for recycling GMP and indirectly, cGMP. The polypeptide is Guanylate kinase (Maricaulis maris (strain MCS10) (Caulobacter maris)).